The chain runs to 275 residues: F-box only protein 50 (275 aa).

Residues 1-67 form a disordered region; that stretch reads MEEVREGHAL…LPEPAQPSEA (67 aa). Pro residues predominate over residues 26–62; the sequence is PPSPRSPSPPPSPPPLPSPPSLPSPAAPEAPELPEPA. Phosphoserine occurs at positions 31, 37, and 49. In terms of domain architecture, FBA spans 95–273; sequence LLLRRPLYRN…VTDSSVSVQL (179 aa).

In terms of tissue distribution, expressed in the esophagus, oral cavity, skin, tongue and reproductive organs.

The protein resides in the cytoplasm. Its function is as follows. Promotes cell proliferation. The chain is F-box only protein 50 (NCCRP1) from Homo sapiens (Human).